We begin with the raw amino-acid sequence, 763 residues long: 5-methyltetrahydropteroyltriglutamate--homocysteine methyltransferase (763 aa).

Residues 16-19 (RELK) and Lys121 contribute to the 5-methyltetrahydropteroyltri-L-glutamate site. Residues 440-442 (IGS) and Glu493 contribute to the L-homocysteine site. L-methionine is bound by residues 440 to 442 (IGS) and Glu493. Residues 524 to 525 (RC) and Trp570 contribute to the 5-methyltetrahydropteroyltri-L-glutamate site. Asp608 is an L-homocysteine binding site. L-methionine is bound at residue Asp608. Glu614 is a 5-methyltetrahydropteroyltri-L-glutamate binding site. The Zn(2+) site is built by His650, Cys652, and Glu674. His703 functions as the Proton donor in the catalytic mechanism. Cys735 lines the Zn(2+) pocket.

Belongs to the vitamin-B12 independent methionine synthase family. Zn(2+) is required as a cofactor.

It catalyses the reaction 5-methyltetrahydropteroyltri-L-glutamate + L-homocysteine = tetrahydropteroyltri-L-glutamate + L-methionine. The protein operates within amino-acid biosynthesis; L-methionine biosynthesis via de novo pathway; L-methionine from L-homocysteine (MetE route): step 1/1. Functionally, catalyzes the transfer of a methyl group from 5-methyltetrahydrofolate to homocysteine resulting in methionine formation. In Paraburkholderia phymatum (strain DSM 17167 / CIP 108236 / LMG 21445 / STM815) (Burkholderia phymatum), this protein is 5-methyltetrahydropteroyltriglutamate--homocysteine methyltransferase.